The sequence spans 303 residues: tRNA pseudouridine synthase B (303 aa).

Asp-47 functions as the Nucleophile in the catalytic mechanism.

It belongs to the pseudouridine synthase TruB family. Type 1 subfamily.

The catalysed reaction is uridine(55) in tRNA = pseudouridine(55) in tRNA. Functionally, responsible for synthesis of pseudouridine from uracil-55 in the psi GC loop of transfer RNAs. The sequence is that of tRNA pseudouridine synthase B from Legionella pneumophila (strain Lens).